The primary structure comprises 98 residues: uncharacterized protein (98 aa).

The next 2 membrane-spanning stretches (helical) occupy residues 13–33 and 65–85; these read LFSL…IAIF and IMVI…IFIS.

It localises to the membrane. This is an uncharacterized protein from Saccharomyces cerevisiae (strain ATCC 204508 / S288c) (Baker's yeast).